A 264-amino-acid chain; its full sequence is Triosephosphate isomerase (264 aa).

Position 12-14 (12-14 (NWK)) interacts with substrate. Residue histidine 104 is the Electrophile of the active site. The active-site Proton acceptor is glutamate 176. Residues glycine 182, serine 222, and 243 to 244 (GG) each bind substrate.

It belongs to the triosephosphate isomerase family. In terms of assembly, homodimer.

The protein localises to the cytoplasm. It carries out the reaction D-glyceraldehyde 3-phosphate = dihydroxyacetone phosphate. It participates in carbohydrate biosynthesis; gluconeogenesis. Its pathway is carbohydrate degradation; glycolysis; D-glyceraldehyde 3-phosphate from glycerone phosphate: step 1/1. In terms of biological role, involved in the gluconeogenesis. Catalyzes stereospecifically the conversion of dihydroxyacetone phosphate (DHAP) to D-glyceraldehyde-3-phosphate (G3P). In Bifidobacterium adolescentis (strain ATCC 15703 / DSM 20083 / NCTC 11814 / E194a), this protein is Triosephosphate isomerase.